A 528-amino-acid chain; its full sequence is Linear primary-alkylsulfatase (528 aa).

Zn(2+)-binding residues include histidine 42, histidine 44, aspartate 46, histidine 47, glutamate 151, and glutamate 170. Sulfate contacts are provided by residues 179-184 and arginine 189; that span reads NVHTLR. Zn(2+) is bound at residue histidine 213. Tyrosine 275 lines the sulfate pocket.

It belongs to the metallo-beta-lactamase superfamily. Type III sulfatase family. It depends on Zn(2+) as a cofactor.

The catalysed reaction is a primary linear alkyl sulfate ester + H2O = a primary alcohol + sulfate + H(+). Its function is as follows. Alkylsulfatase that cleaves the widely used detergent sodium dodecyl sulfate (SDS), which allows the bacterium to use SDS as a sole carbon or sulfur source. This is Linear primary-alkylsulfatase from Pseudomonas sp. (strain ATCC 19151).